The sequence spans 181 residues: ADP-ribosylation factor 2-A (181 aa).

A lipid anchor (N-myristoyl glycine) is attached at glycine 2. GTP is bound by residues 24–31, 67–71, and 126–129; these read GLDAAGKT, DVGGQ, and NKQD.

This sequence belongs to the small GTPase superfamily. Arf family.

Its subcellular location is the golgi apparatus. With respect to regulation, activated by AGD10. Functionally, GTP-binding protein involved in protein trafficking; may modulate vesicle budding and uncoating within the Golgi apparatus. This chain is ADP-ribosylation factor 2-A (ARF2-A), found in Arabidopsis thaliana (Mouse-ear cress).